We begin with the raw amino-acid sequence, 288 residues long: Protoheme IX farnesyltransferase (288 aa).

Helical transmembrane passes span 16–36 (VWSL…NRFT), 37–57 (LTNI…SMGA), 88–108 (VKGL…LLFF), 111–131 (YLAA…YSYL), 138–158 (WNII…WYTV), 162–182 (FSVL…IHVW), 210–230 (AICI…PVFF), 236–256 (TYMI…VLFV), and 265–285 (LKLF…VLIF).

This sequence belongs to the UbiA prenyltransferase family. Protoheme IX farnesyltransferase subfamily.

It localises to the cell membrane. It carries out the reaction heme b + (2E,6E)-farnesyl diphosphate + H2O = Fe(II)-heme o + diphosphate. The protein operates within porphyrin-containing compound metabolism; heme O biosynthesis; heme O from protoheme: step 1/1. Its function is as follows. Converts heme B (protoheme IX) to heme O by substitution of the vinyl group on carbon 2 of heme B porphyrin ring with a hydroxyethyl farnesyl side group. This Thermoplasma volcanium (strain ATCC 51530 / DSM 4299 / JCM 9571 / NBRC 15438 / GSS1) protein is Protoheme IX farnesyltransferase.